We begin with the raw amino-acid sequence, 300 residues long: tRNA dimethylallyltransferase (300 aa).

9–16 serves as a coordination point for ATP; that stretch reads GPTASGKT. 11-16 is a binding site for substrate; that stretch reads TASGKT. Residues 34-37 form an interaction with substrate tRNA region; it reads DSQQ.

It belongs to the IPP transferase family. Monomer. Requires Mg(2+) as cofactor.

The catalysed reaction is adenosine(37) in tRNA + dimethylallyl diphosphate = N(6)-dimethylallyladenosine(37) in tRNA + diphosphate. Catalyzes the transfer of a dimethylallyl group onto the adenine at position 37 in tRNAs that read codons beginning with uridine, leading to the formation of N6-(dimethylallyl)adenosine (i(6)A). This is tRNA dimethylallyltransferase from Anaeromyxobacter sp. (strain Fw109-5).